The chain runs to 673 residues: MDTQIIAAEKPLMAQARPRKPAPFLPMSRAEMDALGWDACDIVLVTGDAYVDHPSFGMAIIGRLLEAQGFRVGIIAQPDWHSAEPLRALGKPKVFFGVTGGNMDSMVNRYTADRRLRHDDAYTAGGEGGKRPDRCTIVYAQRCREAFKDVPVVLGGIEASLRRIAHYDYWSDKVRRSVLADAKADLLLYGNAERAVVEVANRLAAGEAPRELDDIRGVALFRRVPEDYSELHADDLDSADEGATRQKGATVIRLPALEQVEQDKEAYARASRVLHRESNPGNARPLVQRHGDRDLWLNPPPIPLTSDEMDAVYDLPYARAPHPSYGDAKIPAWDMIKFSVTIMRGCFGGCTFCSITEHEGRIIQNRSEGSILREIEKIRDKTPGFTGVISDIGGPTANMYRMACKDPKVEGACRRPSCVFPEICPNLNTSHDDLIRLYRKVRETKGIKKVMVASGVRYDLAVESPEYIKELVTHHVGGYLKIAPEHTERGPLDKMMKPGIGAYNQFKRMFDAAAEQAGKKYYLIPYFIAAHPGTTDEDMMNLALWLKKNRYRADQVQTFLPSPMATATAMYHTGVNPLRGVRHGGSDKVEAIKGLRQRRLHKAFLRYHDPDNWPVLREALKAMGRADLIGSRPDQLVPAHQPPGTGKAAGTRRPVRPGGKTQRFTTKGLRVMK.

The Radical SAM core domain maps to Ala-332–Asp-611. Positions 346, 350, and 353 each coordinate [4Fe-4S] cluster. The segment at Arg-632–Lys-673 is disordered.

This sequence belongs to the UPF0313 family. [4Fe-4S] cluster serves as cofactor.

The protein is UPF0313 protein blr7973 of Bradyrhizobium diazoefficiens (strain JCM 10833 / BCRC 13528 / IAM 13628 / NBRC 14792 / USDA 110).